A 222-amino-acid chain; its full sequence is N-(5'-phosphoribosyl)anthranilate isomerase (222 aa).

Belongs to the TrpF family.

The catalysed reaction is N-(5-phospho-beta-D-ribosyl)anthranilate = 1-(2-carboxyphenylamino)-1-deoxy-D-ribulose 5-phosphate. It participates in amino-acid biosynthesis; L-tryptophan biosynthesis; L-tryptophan from chorismate: step 3/5. This is N-(5'-phosphoribosyl)anthranilate isomerase from Rhizobium rhizogenes (strain K84 / ATCC BAA-868) (Agrobacterium radiobacter).